A 450-amino-acid polypeptide reads, in one-letter code: SAGA complex/transcription factor TFIID complex subunit Taf12 (450 aa).

3 stretches are compositionally biased toward polar residues: residues 1–10, 19–29, and 190–212; these read MNGQHSSPGT, PVNQAQFSQQR, and QNRQ…NAST. 2 disordered regions span residues 1–29 and 190–281; these read MNGQ…SQQR and QNRQ…VEKS. Positions 217–236 are enriched in low complexity; it reads STASTPQLQQTQAQANAPQQ. Polar residues-rich tracts occupy residues 237–246 and 255–281; these read RINPETSSVP and ANVS…VEKS. At Ser297 the chain carries Phosphoserine. A Histone-fold domain is found at 338-413; that stretch reads NGNRLLSKRK…HLERNWNIRL (76 aa). The disordered stretch occupies residues 426–450; sequence RKTGPTPSYQQKQNAIGTAKSLNKD. Residues 430-441 are compositionally biased toward polar residues; sequence PTPSYQQKQNAI.

Belongs to the TAF12 family. As to quaternary structure, component of the 1.8 MDa SAGA (Spt-Ada-Gcn5 acetyltransferase) complex, which is composed of 19 subunits tra1, spt7, taf5, ngg1/ada3, sgf73, spt20, spt8, taf12, taf6, hfi1/ada1, ubp8, gcn5, ada2, spt3, sgf29, taf10, taf9, sgf11 and sus1. The SAGA complex is composed of 4 modules, namely the HAT (histone acetyltransferase) module (gcn5, ada2, ngg1/ada3 and sgf29), the DUB (deubiquitinating) module (ubp8, sgf11, sgf73 and sus1), the core or TAF (TBP-associated factor) module (taf5, taf6, taf9, taf10 and taf12), and the Tra1 or SPT (Suppressor of Ty) module (tra1, hfi1/ada1, spt3, spt7, spt8 and spt20). The Tra1/SPT module binds activators, the core module recruits TBP (TATA-binding protein), the HAT module contains the histone H3 acetyltransferase gcn5, and the DUB module comprises the histone H2B deubiquitinase ubp8. Component of the 1.2 MDa TFIID complex, which is composed of TATA-binding protein (TBP) and the 14 TBP-associated factors (TAFs). It comprises 1 copy of each taf1, taf2, taf3, taf7, taf8, taf11, taf13, 2 copies of each taf4, taf5, taf6, taf9, taf10, taf12, and 3 copies of taf14. In TFIID, taf12 heterodimerizes with taf4, forming ultimately an octamer consisting of a taf6-taf9 heterotetramer core flanked by taf4-taf12 dimers on either side, similar to the histone H2A-H2B-H3-H4 octamer.

The protein resides in the nucleus. Functionally, functions as a component of both the DNA-binding general transcription initiation factor complex TFIID and the transcription coactivator SAGA complex. Binding of TFIID to a promoter (with or without TATA element) is the initial step in pre-initiation complex (PIC) formation. TFIID plays a key role in the regulation of gene expression by RNA polymerase II through different activities such as transcription activator interaction, core promoter recognition and selectivity, TFIIA and TFIIB interaction, chromatin modification (histone acetylation by TAF1), facilitation of DNA opening and initiation of transcription. SAGA acts as a general cofactor required for essentially all RNA polymerase II transcription. At the promoters, SAGA is required for transcription pre-initiation complex (PIC) recruitment. It influences RNA polymerase II transcriptional activity through different activities such as TBP interaction (via core/TAF module) and promoter selectivity, interaction with transcription activators (via Tra1/SPT module), and chromatin modification through histone acetylation (via HAT module) and deubiquitination (via DUB module). SAGA preferentially acetylates histones H3 (to form H3K9ac, H3K14ac, H3K18ac and H3K23ac) and H2B and deubiquitinates histone H2B. SAGA interacts with DNA via upstream activating sequences (UASs). The chain is SAGA complex/transcription factor TFIID complex subunit Taf12 from Schizosaccharomyces pombe (strain 972 / ATCC 24843) (Fission yeast).